The sequence spans 779 residues: ATP-dependent RNA helicase SUPV3L1, mitochondrial (779 aa).

Residues 1–40 (MSLPRCTLLWARLPAGRGAGPRAAPCSALRALVGSFPGAS) constitute a mitochondrion transit peptide. Lys99 bears the N6-acetyllysine mark. The 141-residue stretch at 194 to 334 (EARARQRKII…AINLVSELLY (141 aa)) folds into the Helicase ATP-binding domain. 207–214 (GPTNSGKT) is a binding site for ATP. Residues 353–521 (VLDHALESLD…PTAEQIEMFA (169 aa)) form the Helicase C-terminal domain. Residues 650 to 779 (PDSSLVRSLQ…RRKKKDPDSD (130 aa)) are interaction with LAMTOR5, important for protein stability. The span at 693 to 703 (SGDQSRLSGAS) shows a compositional bias: polar residues. Disordered regions lie at residues 693 to 732 (SGDQSRLSGASKSPARRTRGTKSAGNKATEPLSPSDKELP) and 754 to 779 (EWLTQQPEHSREKVGTRRKKKDPDSD). Residue Ser725 is modified to Phosphoserine. The segment covering 761 to 779 (EHSREKVGTRRKKKDPDSD) has biased composition (basic and acidic residues).

It belongs to the helicase family. In terms of assembly, homodimer; in free form. Component of the mitochondrial degradosome (mtEXO) complex which is a heteropentamer containing 2 copies of SUPV3L1 and 3 copies of PNPT1. As part of mitochondrial degradosome complex, interacts with GRSF1 in a RNA-dependent manner; the interaction enhances the activity of the complex. Interacts with LAMTOR5/HBXIP, WRN and BLM. Requires Mg(2+) as cofactor. Mn(2+) serves as cofactor.

Its subcellular location is the nucleus. It localises to the mitochondrion matrix. The protein localises to the mitochondrion nucleoid. The catalysed reaction is ATP + H2O = ADP + phosphate + H(+). Its activity is regulated as follows. Helicase activity toward DNA substrate is inhibited by micromolar concentrations of 5,6-dichloro-1-(beta-D-ribofuranosyl)benzotriazole (DRBT) and 4,5,6,7-tetrabromobenzotriazole (TBBT). Helicase activity toward RNA substrate is inhibited by elevated concentrations of TBBT. Inhibited by some ring-expanded nucleoside analogs. In terms of biological role, major helicase player in mitochondrial RNA metabolism. Component of the mitochondrial degradosome (mtEXO) complex, that degrades 3' overhang double-stranded RNA with a 3'-to-5' directionality in an ATP-dependent manner. Involved in the degradation of non-coding mitochondrial transcripts (MT-ncRNA) and tRNA-like molecules. ATPase and ATP-dependent multisubstrate helicase, able to unwind double-stranded (ds) DNA and RNA, and RNA/DNA heteroduplexes in the 5'-to-3' direction. Plays a role in the RNA surveillance system in mitochondria; regulates the stability of mature mRNAs, the removal of aberrantly formed mRNAs and the rapid degradation of non coding processing intermediates. Also implicated in recombination and chromatin maintenance pathways. May protect cells from apoptosis. Associates with mitochondrial DNA. This is ATP-dependent RNA helicase SUPV3L1, mitochondrial (Supv3l1) from Mus musculus (Mouse).